The sequence spans 123 residues: Diacylglycerol kinase (123 aa).

Residues 15 to 32 (ILNATGYSLAGFLAAFRG) form a helical membrane-spanning segment. An a divalent metal cation-binding site is contributed by Glu33. Helical transmembrane passes span 35–55 (AFRQ…LLDV), 61–81 (ALMI…SAIE), and 102–122 (GSAA…TILL). Glu74 functions as the Proton acceptor in the catalytic mechanism. Glu81 is an a divalent metal cation binding site.

It belongs to the bacterial diacylglycerol kinase family. Mg(2+) is required as a cofactor.

The protein localises to the cell inner membrane. The catalysed reaction is a 1,2-diacyl-sn-glycerol + ATP = a 1,2-diacyl-sn-glycero-3-phosphate + ADP + H(+). Functionally, catalyzes the ATP-dependent phosphorylation of sn-l,2-diacylglycerol (DAG) to phosphatidic acid. Involved in the recycling of diacylglycerol produced as a by-product during membrane-derived oligosaccharide (MDO) biosynthesis. This is Diacylglycerol kinase (dgkA) from Pseudomonas aeruginosa (strain ATCC 15692 / DSM 22644 / CIP 104116 / JCM 14847 / LMG 12228 / 1C / PRS 101 / PAO1).